The primary structure comprises 48 residues: Photosystem II reaction center protein K (48 aa).

Positions 1–11 are excised as a propeptide; that stretch reads MFLFNLEQSIG. A helical membrane pass occupies residues 23 to 43; the sequence is LVDVLPIIPLLFLLLAFVWQA.

Belongs to the PsbK family. In terms of assembly, PSII is composed of 1 copy each of membrane proteins PsbA, PsbB, PsbC, PsbD, PsbE, PsbF, PsbH, PsbI, PsbJ, PsbK, PsbL, PsbM, PsbT, PsbX, PsbY, PsbZ, Psb30/Ycf12, at least 3 peripheral proteins of the oxygen-evolving complex and a large number of cofactors. It forms dimeric complexes.

Its subcellular location is the plastid. It is found in the chloroplast thylakoid membrane. Its function is as follows. One of the components of the core complex of photosystem II (PSII). PSII is a light-driven water:plastoquinone oxidoreductase that uses light energy to abstract electrons from H(2)O, generating O(2) and a proton gradient subsequently used for ATP formation. It consists of a core antenna complex that captures photons, and an electron transfer chain that converts photonic excitation into a charge separation. This chain is Photosystem II reaction center protein K, found in Lepocinclis buetschlii.